Here is a 1405-residue protein sequence, read N- to C-terminus: DNA-directed RNA polymerase subunit beta' (1405 aa).

Zn(2+) is bound by residues Cys-70, Cys-72, Cys-85, and Cys-88. Residues Asp-460, Asp-462, and Asp-464 each coordinate Mg(2+). Residues Cys-814, Cys-888, Cys-895, and Cys-898 each contribute to the Zn(2+) site.

It belongs to the RNA polymerase beta' chain family. The RNAP catalytic core consists of 2 alpha, 1 beta, 1 beta' and 1 omega subunit. When a sigma factor is associated with the core the holoenzyme is formed, which can initiate transcription. It depends on Mg(2+) as a cofactor. Zn(2+) serves as cofactor.

The enzyme catalyses RNA(n) + a ribonucleoside 5'-triphosphate = RNA(n+1) + diphosphate. DNA-dependent RNA polymerase catalyzes the transcription of DNA into RNA using the four ribonucleoside triphosphates as substrates. In Shewanella sediminis (strain HAW-EB3), this protein is DNA-directed RNA polymerase subunit beta'.